Consider the following 126-residue polypeptide: Glycine cleavage system H protein (126 aa).

The 82-residue stretch at 22–103 (KAYIGITDYA…PYGSWMALVE (82 aa)) folds into the Lipoyl-binding domain. An N6-lipoyllysine modification is found at lysine 63.

It belongs to the GcvH family. In terms of assembly, the glycine cleavage system is composed of four proteins: P, T, L and H. Requires (R)-lipoate as cofactor.

Functionally, the glycine cleavage system catalyzes the degradation of glycine. The H protein shuttles the methylamine group of glycine from the P protein to the T protein. This is Glycine cleavage system H protein from Thermoanaerobacter sp. (strain X514).